Here is a 438-residue protein sequence, read N- to C-terminus: Ammonium transporter Rh type A (438 aa).

Topologically, residues 1-4 (MRFK) are cytoplasmic. A helical membrane pass occupies residues 5 to 25 (FPLMAISLEVAMIVLFGLFVE). Over 26–61 (YETPQNASQKNASHQNASQQGNTSSSAKKDQFFQLY) the chain is Extracellular. Residues N31, N36, N41, and N47 are each glycosylated (N-linked (GlcNAc...) asparagine). A helical transmembrane segment spans residues 62–82 (PLFQDVHVMIFVGFGFLMTFL). Over 83–86 (KKYG) the chain is Cytoplasmic. A helical membrane pass occupies residues 87–107 (FSGVGFNLFLAALGLQWGTIM). The Extracellular portion of the chain corresponds to 108-121 (QGLLHSHGKEFHFG). Residues 122–142 (IYNMINADFSTATVLISFGAV) form a helical membrane-spanning segment. The Cytoplasmic segment spans residues 143 to 148 (LGKTSP). Residues 149 to 169 (IQMLIMTILEIAVFAGNEYLV) traverse the membrane as a helical segment. At 170–178 (TELFEASDT) the chain is on the extracellular side. The helical transmembrane segment at 179–199 (GASMTIHAFGAYFGLAVAGVL) threads the bilayer. Over 200-218 (YRPGLRCEHPNDESVYHSD) the chain is Cytoplasmic. The chain crosses the membrane as a helical span at residues 219-239 (LFAMIGTLFLWIFWPSFNSAI). Residues 240–249 (ADPGDHQYRA) lie on the Extracellular side of the membrane. A helical membrane pass occupies residues 250–270 (IVNTYMSLAACVITAYALSSL). At 271–278 (VERRGRLD) the chain is on the cytoplasmic side. Residues 279 to 296 (MVHIQNATLAGGVAVGTC) form a helical membrane-spanning segment. Over 297–300 (ADME) the chain is Extracellular. Residues 301–321 (IPLYAAMTIGSIAGIISVLGY) form a helical membrane-spanning segment. The Cytoplasmic portion of the chain corresponds to 322 to 342 (KFFSPLLANKLMIHDTCGVHN). A helical membrane pass occupies residues 343–363 (LHGLPGVFGGLASIVAISWGM). The Extracellular segment spans residues 364 to 372 (STASMAMQA). A helical membrane pass occupies residues 373-393 (AALGSSIGSAIVGGLLTGLIL). The Cytoplasmic segment spans residues 394-438 (KLPIWNQPPDEYCYDDSVSWKVPKFRELDNRFFQHANHNHVEHEV).

Belongs to the ammonium transporter (TC 2.A.49) family. Rh subfamily. As to quaternary structure, homodimer. Heterotrimer; a RHCE monomer interacts with a RHAG homodimer. Component of the ankyrin-1 complex in the erythrocyte, composed of ANK1, RHCE, RHAG, SLC4A1, EPB42, GYPA, GYPB and AQP1. Interacts with GYPB (via the N-terminal); this interaction bridges the (RHAG)2(RHCE) heterotrimer with the SLC4A1 Band 3 I dimer complexed with GYPA. Glycosylated.

It localises to the membrane. It catalyses the reaction methylamine(out) = methylamine(in). The enzyme catalyses NH4(+)(in) = NH4(+)(out). The catalysed reaction is CO2(out) = CO2(in). Its function is as follows. Component of the ankyrin-1 complex, a multiprotein complex involved in the stability and shape of the erythrocyte membrane. Heterotrimer with RHCE (RHAG)2(RHCE), that transports ammonium and its related derivative methylammonium, in both neutral and ionic forms, across the erythrocyte membrane. The transport of NH4(+) is electrogenic and masks the NH3 transport. Also, may act as a CO2 channel. Moreover in erythrocyte, regulates RHD membrane expression and is associated with rhesus blood group antigen expression. The sequence is that of Ammonium transporter Rh type A from Mus musculus (Mouse).